The chain runs to 156 residues: ATP synthase subunit b (156 aa).

A helical transmembrane segment spans residues 5 to 27 (ITLIGQMITFAIFVGFTMKFVWP).

It belongs to the ATPase B chain family. As to quaternary structure, F-type ATPases have 2 components, F(1) - the catalytic core - and F(0) - the membrane proton channel. F(1) has five subunits: alpha(3), beta(3), gamma(1), delta(1), epsilon(1). F(0) has three main subunits: a(1), b(2) and c(10-14). The alpha and beta chains form an alternating ring which encloses part of the gamma chain. F(1) is attached to F(0) by a central stalk formed by the gamma and epsilon chains, while a peripheral stalk is formed by the delta and b chains.

It is found in the cell inner membrane. Functionally, f(1)F(0) ATP synthase produces ATP from ADP in the presence of a proton or sodium gradient. F-type ATPases consist of two structural domains, F(1) containing the extramembraneous catalytic core and F(0) containing the membrane proton channel, linked together by a central stalk and a peripheral stalk. During catalysis, ATP synthesis in the catalytic domain of F(1) is coupled via a rotary mechanism of the central stalk subunits to proton translocation. Component of the F(0) channel, it forms part of the peripheral stalk, linking F(1) to F(0). The polypeptide is ATP synthase subunit b (Francisella tularensis subsp. tularensis (strain WY96-3418)).